The sequence spans 368 residues: WD repeat-containing protein RUP2 (368 aa).

WD repeat units follow at residues 38 to 77 (SASD…RNNA), 97 to 138 (CTPA…PVFE), 141 to 184 (EHGG…EESV), 192 to 232 (ICRS…DPAL), 236 to 276 (GHTK…RTYE), 279 to 318 (VNNR…PVWV), and 330 to 368 (SDKR…KRKP).

Interacts with UVR8.

Its subcellular location is the nucleus. The protein resides in the cytoplasm. It localises to the cytosol. Functionally, functions in association with RUP1 as repressor of UV-B-induced photomorphogenesis mediated by UVR8 and HY5. Plays a crucial negative feedback regulatory role downstream of UVR8-COP1 to inhibit UVR8 function, balance UV-B-specific responses and ensure normal plant growth. Is involved in the regulation of photoperiodic flowering and vegetative development. May act as negative regulator of photoperiodic flowering by suppressing flowering through the action of CONSTANS (CO) and FLOWERING LOCUS T (FT). This Arabidopsis thaliana (Mouse-ear cress) protein is WD repeat-containing protein RUP2 (RUP2).